The primary structure comprises 279 residues: Zinc-finger homeodomain protein 1 (279 aa).

The span at Met1–Met13 shows a compositional bias: acidic residues. Residues Met1–Val47 are disordered. The ZF-HD dimerization-type; degenerate zinc-finger motif lies at Tyr57–Glu106. The interval Arg168–Val190 is disordered. Positions Lys215–Leu278 form a DNA-binding region, homeobox.

As to quaternary structure, homo- and heterodimer with other ZFHD proteins.

The protein localises to the nucleus. In terms of biological role, putative transcription factor. The polypeptide is Zinc-finger homeodomain protein 1 (ZHD1) (Oryza sativa subsp. japonica (Rice)).